Reading from the N-terminus, the 528-residue chain is MSHRARHQLLALPGIIFLVLFPIILSLWIAFLWAKSEVNNQLRTFAQLALDKSELVIRQADLVSDAAERYQGQVCTPAHQKRMLNIIRGYLYINELIYARDNHFLCSSLIAPVNGYTIAPADYKREPNVSIYYYRDTPFFSGYKMTYMQRGNYVAVINPLFWSEVMSDDPTLQWGVYDTVTKTFFSLSKEASAATFSPLIHLKDLTVQRNGYLYATVYSTKRPIAAIVATSYQRLITHFYNHLIFALPAGILGSLVLLLLWLRIRQNYLSPKRKLQRALEKHQLCLYYQPIIDIKTEKCIGAEALLRWPGEQGQIMNPAEFIPLAEKEGMIEQITDYVIDNVFRDLGDYLATHADRYVSINLSASDFHTSRLIARINQKTEQYAVRPQQIKFEVTEHAFLDVDKMTPIILAFRQAGYEVAIDDFGIGYSNLHNLKSLNVDILKIDKSFVETLTTHKTSHLIAEHIIELAHSLGLKTIAEGVETEEQVNWLRKRGVRYCQGWFFAKAMPPQVFMQWMEQLPARELTRGQ.

A run of 2 helical transmembrane segments spans residues 14 to 34 (GIIF…FLWA) and 242 to 262 (HLIF…LLWL). In terms of domain architecture, EAL spans 268-520 (YLSPKRKLQR…VFMQWMEQLP (253 aa)).

Its subcellular location is the cell inner membrane. It carries out the reaction 3',3'-c-di-GMP + H2O = 5'-phosphoguanylyl(3'-&gt;5')guanosine + H(+). Phosphodiesterase (PDE) that catalyzes the hydrolysis of cyclic-di-GMP (c-di-GMP) to 5'-pGpG. Cyclic-di-GMP is a second messenger which controls cell surface-associated traits in bacteria. Overexpression reduces biofilm formation. The chain is Probable cyclic di-GMP phosphodiesterase PdeC from Escherichia coli (strain K12).